The chain runs to 100 residues: Replication restart protein PriB (100 aa).

Residues 1–100 (MTNRMELSGT…VLHADDIIHI (100 aa)) enclose the SSB domain.

It belongs to the PriB family. Homodimer. Interacts with PriA and DnaT. Component of the replication restart primosome. Primosome assembly occurs via a 'hand-off' mechanism. PriA binds to replication forks, subsequently PriB then DnaT bind; DnaT then displaces ssDNA to generate the helicase loading substrate.

Functionally, involved in the restart of stalled replication forks, which reloads the replicative helicase on sites other than the origin of replication; the PriA-PriB pathway is the major replication restart pathway. During primosome assembly it facilitates complex formation between PriA and DnaT on DNA; stabilizes PriA on DNA. Stimulates the DNA unwinding activity of PriA helicase. The protein is Replication restart protein PriB of Vibrio vulnificus (strain CMCP6).